Consider the following 95-residue polypeptide: Large ribosomal subunit protein bL27 (95 aa).

Residues 1-12 constitute a propeptide that is removed on maturation; the sequence is MLLIKKINLQFF. Residues 17–37 form a disordered region; that stretch reads GVGSTKNGRDSNPKYLGAKKS.

This sequence belongs to the bacterial ribosomal protein bL27 family. In terms of processing, the N-terminus is cleaved by ribosomal processing cysteine protease Prp.

In Malacoplasma penetrans (strain HF-2) (Mycoplasma penetrans), this protein is Large ribosomal subunit protein bL27.